The sequence spans 394 residues: Transcriptional regulator Myc-1 (394 aa).

Thr-58 is a glycosylation site (O-linked (GlcNAc) threonine). Residues 76–84 carry the 9aaTAD motif; the sequence is EMVSEFLGD. Disordered regions lie at residues 177-247 and 283-318; these read SGKS…SRYP and EASS…HNVL. The span at 205–226 shows a compositional bias: acidic residues; the sequence is DSEEEEEEEEEEEEEEEEEEID. The span at 229 to 238 shows a compositional bias: basic and acidic residues; that stretch reads TVEKRQKKNE. In terms of domain architecture, bHLH spans 310–362; the sequence is DKRRTHNVLERQRRNELKLSFFALRDEIPDVANNEKAAKVVILKKATECIHSM. The segment at 369–390 is leucine-zipper; it reads LLSIKEQLRRKSEQLKHRLQLL.

In terms of assembly, efficient DNA binding requires dimerization with another bHLH protein. Binds DNA as a heterodimer with MAX.

It is found in the nucleus. Transcription factor that binds DNA in a non-specific manner, yet also specifically recognizes the core sequence 5'-CAC[GA]TG-3'. Activates the transcription of growth-related genes. This Cyprinus carpio (Common carp) protein is Transcriptional regulator Myc-1 (myca).